The chain runs to 485 residues: Glutamyl-tRNA(Gln) amidotransferase subunit A (485 aa).

Active-site charge relay system residues include Lys-79 and Ser-154. The active-site Acyl-ester intermediate is Ser-178.

The protein belongs to the amidase family. GatA subfamily. As to quaternary structure, heterotrimer of A, B and C subunits.

It carries out the reaction L-glutamyl-tRNA(Gln) + L-glutamine + ATP + H2O = L-glutaminyl-tRNA(Gln) + L-glutamate + ADP + phosphate + H(+). Allows the formation of correctly charged Gln-tRNA(Gln) through the transamidation of misacylated Glu-tRNA(Gln) in organisms which lack glutaminyl-tRNA synthetase. The reaction takes place in the presence of glutamine and ATP through an activated gamma-phospho-Glu-tRNA(Gln). The chain is Glutamyl-tRNA(Gln) amidotransferase subunit A from Clostridium botulinum (strain ATCC 19397 / Type A).